The following is a 245-amino-acid chain: Terpene cyclase prhH (245 aa).

7 helical membrane passes run 17–37 (ILAI…VNYI), 51–71 (IGIL…WMFP), 76–96 (HWQG…LVTL), 113–133 (IVFI…ALAA), 138–158 (ALGF…CGIA), 170–190 (SYLI…KLCI), and 205–225 (PMCW…PFLY).

The protein belongs to the paxB family.

It is found in the membrane. The protein operates within secondary metabolite biosynthesis; terpenoid biosynthesis. Its function is as follows. Terpene cyclase; part of the gene cluster that mediates the biosynthesis of paraherquonin, a meroterpenoid with a unique, highly congested hexacyclic molecular architecture. The first step of the pathway is the synthesis of 3,5-dimethylorsellinic acid (DMOA) by the polyketide synthase prhL. Synthesis of DMOA is followed by farnesylation by the prenyltransferase prhE, methylesterification by the methyl-transferase prhM, epoxidation of the prenyl chain by the flavin-dependent monooxygenase prhF, and cyclization of the farnesyl moiety by the terpene cyclase prhH, to yield the tetracyclic intermediate, protoaustinoid A. The short chain dehydrogenase prhI then oxidizes the C-3 alcohol group of the terpene cyclase product to transform protoaustinoid A into protoaustinoid B. The FAD-binding monooxygenase prhJ catalyzes the oxidation of protoaustinoid B into preaustinoid A which is further oxidized into preaustinoid A1 by FAD-binding monooxygenase phrK. Finally, prhA leads to berkeleydione via the berkeleyone B intermediate. PrhA is a multifunctional dioxygenase that first desaturates at C5-C6 to form berkeleyone B, followed by rearrangement of the A/B-ring to form the cycloheptadiene moiety in berkeleydione. Berkeleydione serves as the key intermediate for the biosynthesis of paraherquonin as well as many other meroterpenoids. The cytochrome P450 monooxygenases prhB, prhD, and prhN, as well as the isomerase prhC, are probably involved in the late stage of paraherquonin biosynthesis, after the production of berkeleydione. Especially prhC might be a multifunctional enzyme that catalyzes the D-ring expansion via intramolecular methoxy rearrangement, as well as the hydrolysis of the expanded D-ring. The chain is Terpene cyclase prhH from Penicillium brasilianum.